The primary structure comprises 90 residues: Small ribosomal subunit protein uS15 (90 aa).

It belongs to the universal ribosomal protein uS15 family. As to quaternary structure, part of the 30S ribosomal subunit. Forms a bridge to the 50S subunit in the 70S ribosome, contacting the 23S rRNA.

Functionally, one of the primary rRNA binding proteins, it binds directly to 16S rRNA where it helps nucleate assembly of the platform of the 30S subunit by binding and bridging several RNA helices of the 16S rRNA. In terms of biological role, forms an intersubunit bridge (bridge B4) with the 23S rRNA of the 50S subunit in the ribosome. The chain is Small ribosomal subunit protein uS15 from Aliarcobacter butzleri (strain RM4018) (Arcobacter butzleri).